A 671-amino-acid chain; its full sequence is Sodium, potassium, lithium and rubidium/H(+) antiporter (671 aa).

11 consecutive transmembrane segments (helical) span residues 7–29 (VLVL…FIPV), 46–66 (GLHI…PLLF), 83–103 (PILL…GYTI), 110–130 (IPLP…VVAV), 156–176 (ASGL…AFSI), 182–202 (SFVL…FFII), 228–248 (FVIY…VVAG), 276–296 (IILF…IPDV), 315–335 (ILII…LFWA), 364–384 (GAVT…GSPF), and 389–409 (LIIF…SVLL).

The protein belongs to the monovalent cation:proton antiporter 1 (CPA1) transporter (TC 2.A.36) family. Nhak (TC 2.A.36.3.2) subfamily.

Its subcellular location is the cell membrane. Transporter involved in the efflux of sodium, potassium, lithium and rubidium. This Bacillus pumilus (strain SAFR-032) protein is Sodium, potassium, lithium and rubidium/H(+) antiporter (nhaK).